Reading from the N-terminus, the 452-residue chain is MISVTLSQLTDILNGELQGADITLDAVTTDTRKLTPGCLFVALKGERFDAHDFADQAKAGGAGALLVSRPLDIDLPQLIVKDTRLAFGELAAWVRQQVPARVVALTGSSGKTSVKEMTAAILSQCGNTLYTAGNLNNDIGVPMTLLRLTPEYDYAVIELGANHQGEIAWTVSLTRPEAALVNNLAAAHLEGFGSLAGVAKAKGEIFSGLPENGIAIMNADNNDWLNWQSVIGSRKVWRFSPNAANSDFTATNIHVTSHGTEFTLQTPTGSVDVLLPLPGRHNIANALAAAALSMSVGATLDAIKAGLANLKAVPGRLFPIQLAENQLLLDDSYNANVGSMTAAVQVLAEMPGYRVLVVGDMAELGAESEACHVQVGEAAKAAGIDRVLSVGKQSHAISTASGVGEHFADKTALITRLKLLIAEQQVITILVKGSRSAAMEEVVRALQENGTC.

107–113 (GSSGKTS) provides a ligand contact to ATP.

This sequence belongs to the MurCDEF family. MurF subfamily. As to quaternary structure, monomer.

Its subcellular location is the cytoplasm. It carries out the reaction D-alanyl-D-alanine + UDP-N-acetyl-alpha-D-muramoyl-L-alanyl-gamma-D-glutamyl-meso-2,6-diaminopimelate + ATP = UDP-N-acetyl-alpha-D-muramoyl-L-alanyl-gamma-D-glutamyl-meso-2,6-diaminopimeloyl-D-alanyl-D-alanine + ADP + phosphate + H(+). The protein operates within cell wall biogenesis; peptidoglycan biosynthesis. Functionally, involved in cell wall formation. Catalyzes the final step in the synthesis of UDP-N-acetylmuramoyl-pentapeptide, the precursor of murein. In Escherichia coli (strain K12), this protein is UDP-N-acetylmuramoyl-tripeptide--D-alanyl-D-alanine ligase.